Consider the following 197-residue polypeptide: Imidazoleglycerol-phosphate dehydratase (197 aa).

Belongs to the imidazoleglycerol-phosphate dehydratase family.

Its subcellular location is the cytoplasm. It catalyses the reaction D-erythro-1-(imidazol-4-yl)glycerol 3-phosphate = 3-(imidazol-4-yl)-2-oxopropyl phosphate + H2O. It participates in amino-acid biosynthesis; L-histidine biosynthesis; L-histidine from 5-phospho-alpha-D-ribose 1-diphosphate: step 6/9. The protein is Imidazoleglycerol-phosphate dehydratase of Rhodopseudomonas palustris (strain HaA2).